A 133-amino-acid chain; its full sequence is UPF0292 protein TON_0187 (133 aa).

Residues 20–100 form the Toprim domain; sequence EGAIIVEGPR…RVDSETRKEL (81 aa). Positions 26, 69, and 71 each coordinate Mg(2+).

Belongs to the UPF0292 family. The cofactor is Mg(2+).

In Thermococcus onnurineus (strain NA1), this protein is UPF0292 protein TON_0187.